We begin with the raw amino-acid sequence, 323 residues long: Glyoxylate/hydroxypyruvate reductase B (323 aa).

Catalysis depends on residues arginine 237 and glutamate 266. The active-site Proton donor is the histidine 285.

Belongs to the D-isomer specific 2-hydroxyacid dehydrogenase family. GhrB subfamily. As to quaternary structure, homodimer.

It is found in the cytoplasm. The catalysed reaction is glycolate + NADP(+) = glyoxylate + NADPH + H(+). It carries out the reaction (R)-glycerate + NAD(+) = 3-hydroxypyruvate + NADH + H(+). The enzyme catalyses (R)-glycerate + NADP(+) = 3-hydroxypyruvate + NADPH + H(+). Catalyzes the NADPH-dependent reduction of glyoxylate and hydroxypyruvate into glycolate and glycerate, respectively. The protein is Glyoxylate/hydroxypyruvate reductase B of Klebsiella pneumoniae (strain 342).